Reading from the N-terminus, the 1860-residue chain is Probable helicase with zinc finger domain (1860 aa).

The segment at 168–196 (SEEYTLCKRFLEQGLCRYGAQCTSAHSQE) adopts a C3H1-type zinc-finger fold. 661-668 (GPYGTGKT) serves as a coordination point for ATP. Residues 787–790 (DEAA) carry the DEAA box motif. Disordered regions lie at residues 1106-1136 (RSQH…TEPF), 1158-1177 (TPPG…VQRL), 1286-1317 (ERKA…GFPA), 1556-1604 (IQPR…PPDH), 1641-1709 (RQDP…RYPS), and 1749-1860 (MSEE…TYFK). A compositionally biased stretch (low complexity) spans 1107–1116 (SQHPPQQGPG). A compositionally biased stretch (basic and acidic residues) spans 1286 to 1298 (ERKAPELKEKQGD). The span at 1301–1313 (SVQNKSPEPQSNM) shows a compositional bias: polar residues. The segment covering 1641–1660 (RQDPGPLQHQQQKQQLQAPQ) has biased composition (low complexity). Composition is skewed to pro residues over residues 1760-1769 (QPPPPPPPHP) and 1783-1794 (PLLPSKQTPPDP). Over residues 1847–1860 (GSSNSSNGYYTYFK) the composition is skewed to low complexity.

The protein belongs to the DNA2/NAM7 helicase family.

It is found in the nucleus. May act as a helicase. The sequence is that of Probable helicase with zinc finger domain (helz) from Danio rerio (Zebrafish).